Here is a 486-residue protein sequence, read N- to C-terminus: H2.0-like homeobox protein (486 aa).

2 disordered regions span residues 83–173 and 330–486; these read ASFQ…SSKD and KWRH…LGGL. The span at 125 to 135 shows a compositional bias: low complexity; the sequence is QQQQQQQQPQQ. Positions 276 to 335 form a DNA-binding region, homeobox; it reads RSWSRAVFSNLQRKGLEKRFEIQKYVTKPDRKQLAAMLGLTDAQVKVWFQNRRMKWRHSK. 2 stretches are compositionally biased toward basic and acidic residues: residues 334-349 and 363-372; these read SKEA…EAGE and EERSPSRSEG. The span at 373–383 shows a compositional bias: acidic residues; sequence EAESESSDPES. The span at 390-401 shows a compositional bias: basic and acidic residues; sequence DTERTEGTERSL. The span at 409-420 shows a compositional bias: low complexity; it reads ASAAGALLAASS. A compositionally biased stretch (gly residues) spans 421-440; the sequence is GGSGGSGGGGGGGFNFGGLS. The segment covering 441–474 has biased composition (low complexity); sequence SGSTTSAGSSGSHSSGGASELLPAPQPSLSSAPK. Positions 475–486 are enriched in pro residues; the sequence is SPEPVPAPLGGL.

The protein belongs to the H2.0 homeobox family.

It is found in the nucleus. Its function is as follows. Transcription factor required for TBX21/T-bet-dependent maturation of Th1 cells as well as maintenance of Th1-specific gene expression. Involved in embryogenesis and hematopoiesis. The chain is H2.0-like homeobox protein (HLX) from Bos taurus (Bovine).